Here is an 860-residue protein sequence, read N- to C-terminus: Receptor-like protein 31 (860 aa).

The first 23 residues, 1–23, serve as a signal peptide directing secretion; sequence MMIPSQSCFCFFFMVSFFLHTLA. Residues 24 to 809 lie on the Extracellular side of the membrane; it reads SPTLRHCRHD…SEPEEHVINW (786 aa). N-linked (GlcNAc...) asparagine glycosylation is found at N49, N64, N88, N95, N112, N117, N154, N178, N202, and N213. LRR repeat units follow at residues 108-131, 132-155, 156-179, 181-202, 203-226, and 227-251; these read QHLHNLTLSNCSLYGDIPSSLGNL, FRLTLLDLSYNYLVGQVPPSIGNL, SRLTILDLWDNKLVGQLPASIGNL, QLEYLIFSHNKFSGNIPVTFSN, LTKLLVVNLYNNSFESMLPLDMSG, and FQNLDYFNVGENSFSGTLPKSLFTI. An LRR 7; degenerate repeat occupies 252–276; sequence PSLRWANLEGNMFKGPIEFRNMYSP. 14 LRR repeats span residues 277–301, 302–325, 326–349, 350–374, 376–398, 400–419, 420–444, 446–468, 469–494, 496–517, 518–541, 543–564, 565–591, and 592–615; these read STRLQYLFLSQNKFDGPIPDTLSQY, LNLIELDLSFNNLTGSFPTFLFTI, PTLERVNLEGNHLKGPVEFGNMSS, SSSLKFLNFAQNEFNGSIPESVSQY, NLEELHLSFNNFIGTIPRSISKL, KLEYFCLEDNNMVGEVPSWL, WRLTMVALSNNSFNSFGESSEGLDE, QVQWLDLSSNSFQGPFPHWICKL, RSLEILIMSDNRFNGSIPPCLSSFMV, LTDLILRNNSLSGPLPDIFVNA, TKLLSLDVSRNKLDGVLPKSLIHC, AMQLLNVRSNKIKDKFPSWLGS, LPSLHVLILRSNEFYGTLYQPHASIGF, and QSLRVIDVSHNDLIGTLPSFYFSS. N-linked (GlcNAc...) asparagine glycosylation is found at N313, N346, and N364. N429 is a glycosylation site (N-linked (GlcNAc...) asparagine). N482, N503, and N516 each carry an N-linked (GlcNAc...) asparagine glycan. N642, N673, and N697 each carry an N-linked (GlcNAc...) asparagine glycan. LRR repeat units lie at residues 665-690, 691-714, 716-738, and 740-763; these read INEENKVINFSGNRFSGNIPESIGLL, KELRHLNLSSNAFTGNIPQSLANL, KLEALDLSLNQLSGQIPQGLGSL, and FMSTMNFSYNFLEGPVPKSTQFQG. N-linked (GlcNAc...) asparagine glycans are attached at residues N745 and N765. A helical membrane pass occupies residues 810–830; sequence IAAGIAYGPGVVCGLVIGHIF. Residues 831 to 860 are Cytoplasmic-facing; that stretch reads LSHKHECWFMEKFRRKKPKVVTRIARPSKH.

Belongs to the RLP family.

It localises to the cell membrane. This is Receptor-like protein 31 from Arabidopsis thaliana (Mouse-ear cress).